The primary structure comprises 384 residues: Viral protein 1 (384 aa).

The chain is Viral protein 1 from Chaetoceros setoense (Chaetoceros setoense DNA virus).